A 77-amino-acid chain; its full sequence is Omega-conotoxin-like SO-5 (77 aa).

The first 22 residues, 1-22 (MKLTCVMIVAVLLLTACQLITA), serve as a signal peptide directing secretion. A propeptide spanning residues 23–42 (DDSRGTQKHRSLRSTTKVSK) is cleaved from the precursor. 3 disulfides stabilise this stretch: Cys-46-Cys-61, Cys-53-Cys-64, and Cys-60-Cys-71.

It belongs to the conotoxin O1 superfamily. As to expression, expressed by the venom duct.

The protein resides in the secreted. Its function is as follows. Omega-conotoxins act at presynaptic membranes, they bind and block voltage-gated calcium channels (Cav). This is Omega-conotoxin-like SO-5 (SO5) from Conus striatus (Striated cone).